The chain runs to 256 residues: MAGVITASEPSWIAPFSGLSPRQFGKLVTVLRREGADAVRKGRPWSLPLEDRALLVAAYWRTNLTMRQLAPLFGVSKSAADRIIDHLGPMLALQPRKRFAKDTVLIVDGTLVPTRDHTIAERSKNYRYSTNHQVVIDADTRLVVVVGRPLAGNRNDCKAWEESGAKAAVGKTLTIADGGYPGTGLVIPHRRERGQAGLPDWKEEHNKSHKQVRARVEHVFARMKTWKILRDCRLKGDGVHHAMLGIARMHNLALTG.

It belongs to the transposase 11 family.

Involved in the transposition of the insertion sequence IS112 which inactivates the SalI restriction-modification system. The chain is Putative transposase for insertion sequence element IS112 from Streptomyces albus G.